A 264-amino-acid polypeptide reads, in one-letter code: Thymidylate synthase (264 aa).

DUMP is bound at residue R21. A (6R)-5,10-methylene-5,6,7,8-tetrahydrofolate-binding site is contributed by H51. 126–127 lines the dUMP pocket; sequence RR. C146 (nucleophile) is an active-site residue. Residues 166–169, N177, and 207–209 each bind dUMP; these read RSCD and HLY. D169 lines the (6R)-5,10-methylene-5,6,7,8-tetrahydrofolate pocket. A263 is a binding site for (6R)-5,10-methylene-5,6,7,8-tetrahydrofolate.

This sequence belongs to the thymidylate synthase family. Bacterial-type ThyA subfamily. Homodimer.

The protein localises to the cytoplasm. It catalyses the reaction dUMP + (6R)-5,10-methylene-5,6,7,8-tetrahydrofolate = 7,8-dihydrofolate + dTMP. Its pathway is pyrimidine metabolism; dTTP biosynthesis. In terms of biological role, catalyzes the reductive methylation of 2'-deoxyuridine-5'-monophosphate (dUMP) to 2'-deoxythymidine-5'-monophosphate (dTMP) while utilizing 5,10-methylenetetrahydrofolate (mTHF) as the methyl donor and reductant in the reaction, yielding dihydrofolate (DHF) as a by-product. This enzymatic reaction provides an intracellular de novo source of dTMP, an essential precursor for DNA biosynthesis. The polypeptide is Thymidylate synthase (Buchnera aphidicola subsp. Baizongia pistaciae (strain Bp)).